The following is a 142-amino-acid chain: Thioredoxin-like protein 4A (142 aa).

Cys38 and Cys79 are disulfide-bonded. Position 132 is a phosphoserine (Ser132).

The protein belongs to the DIM1 family. Component of the precatalytic spliceosome (spliceosome B complex). Component of the U5 snRNP complex. Component of the U4/U6-U5 tri-snRNP complex. The U4/U6-U5 tri-snRNP complex is a building block of the precatalytic spliceosome (spliceosome B complex). The U4/U6-U5 tri-snRNP complex is composed of the U4, U6 and U5 snRNAs and at least PRPF3, PRPF4, PRPF6, PRPF8, PRPF31, SNRNP200, TXNL4A, SNRNP40, SNRPB, SNRPD1, SNRPD2, SNRPD3, SNRPE, SNRPF, SNRPG, DDX23, CD2BP2, PPIH, SNU13, EFTUD2, SART1 and USP39, plus LSM2, LSM3, LSM4, LSM5, LSM6, LSM7 and LSM8. Directly interacts with CD2BP2. Interacts with HNRPF, HNRPH2, NEDD9 and PQBP1. Interacts with ERBB4. The disulfide bond seen in structures determined by X-ray crystallography and NMR is not essential for protein folding and function.

It localises to the nucleus. Plays a role in pre-mRNA splicing as component of the U5 snRNP and U4/U6-U5 tri-snRNP complexes that are involved in spliceosome assembly, and as component of the precatalytic spliceosome (spliceosome B complex). In Homo sapiens (Human), this protein is Thioredoxin-like protein 4A (TXNL4A).